We begin with the raw amino-acid sequence, 144 residues long: Large ribosomal subunit protein uL15 (144 aa).

Residues methionine 1–glutamine 54 are disordered. Positions arginine 21 to glycine 31 are enriched in gly residues.

Belongs to the universal ribosomal protein uL15 family. Part of the 50S ribosomal subunit.

In terms of biological role, binds to the 23S rRNA. The sequence is that of Large ribosomal subunit protein uL15 from Salmonella arizonae (strain ATCC BAA-731 / CDC346-86 / RSK2980).